Consider the following 309-residue polypeptide: Aspartate carbamoyltransferase catalytic subunit (309 aa).

Carbamoyl phosphate contacts are provided by Arg58 and Thr59. Lys86 contacts L-aspartate. Carbamoyl phosphate is bound by residues Arg108, His136, and Gln139. Arg170 and Arg224 together coordinate L-aspartate. 2 residues coordinate carbamoyl phosphate: Gly266 and Pro267.

It belongs to the aspartate/ornithine carbamoyltransferase superfamily. ATCase family. In terms of assembly, heterododecamer (2C3:3R2) of six catalytic PyrB chains organized as two trimers (C3), and six regulatory PyrI chains organized as three dimers (R2).

The enzyme catalyses carbamoyl phosphate + L-aspartate = N-carbamoyl-L-aspartate + phosphate + H(+). It functions in the pathway pyrimidine metabolism; UMP biosynthesis via de novo pathway; (S)-dihydroorotate from bicarbonate: step 2/3. In terms of biological role, catalyzes the condensation of carbamoyl phosphate and aspartate to form carbamoyl aspartate and inorganic phosphate, the committed step in the de novo pyrimidine nucleotide biosynthesis pathway. The polypeptide is Aspartate carbamoyltransferase catalytic subunit (Campylobacter curvus (strain 525.92)).